The following is a 1275-amino-acid chain: Membrane-associated guanylate kinase, WW and PDZ domain-containing protein 2 (1275 aa).

The PDZ 1 domain occupies 17 to 101 (ESVIGRNPEG…PLRLKCVKQG (85 aa)). One can recognise a Guanylate kinase-like domain in the interval 109–283 (RHYLNLRFQK…PVYSQPEELK (175 aa)). The tract at residues 203 to 305 (LPGATPSAEG…ENEDSDPLPD (103 aa)) is disordered. A compositionally biased stretch (basic and acidic residues) spans 280-295 (EELKDQMDDTKPTKPE). WW domains lie at 301–334 (DPLP…DPRL) and 347–380 (NELP…NPVL). Residues 301 to 380 (DPLPDNWEMA…RRTQFENPVL (80 aa)) form an interaction with DDN region. Y361 carries the phosphotyrosine modification. PDZ domains are found at residues 425–509 (STTL…CRGY) and 604–682 (TLTI…HRGG). S685 is modified (phosphoserine). Residues 698–740 (ENQGSPQTSLSAPAVPQNLPFPPALHRSSFPDSTEAFDPRKPD) form a disordered region. Positions 699–708 (NQGSPQTSLS) are enriched in polar residues. The region spanning 777 to 859 (DVHLRRMESG…NGQVNLTVRR (83 aa)) is the PDZ 4 domain. Y826 carries the phosphotyrosine modification. The tract at residues 868–912 (CPENGRSPGSVSTHHSSPRSDYATYSNSNHAAPSSNASPPEGFAS) is disordered. S883 and S884 each carry phosphoserine. Residues 893-907 (SNSNHAAPSSNASPP) show a composition bias toward low complexity. Residues 919-1009 (DVVIHRKENE…SVTLRIIPQE (91 aa)) enclose the PDZ 5 domain. The span at 1010–1040 (ELNSPTSAPSSEKQSPMAQQHSPLAQQSPLA) shows a compositional bias: polar residues. Residues 1010-1128 (ELNSPTSAPS…PDTRQYPLSD (119 aa)) form a disordered region. At S1013 the chain carries Phosphoserine. Residues 1067 to 1083 (NSYRSEVKARQDVKPDI) show a composition bias toward basic and acidic residues. Residues 1139-1221 (TVDMEKGAKG…RVRLLLKRGT (83 aa)) enclose the PDZ 6 domain.

It belongs to the MAGUK family. Interacts (via its WW domains) with DRPLA. Interacts (via its second PDZ domain) with PTEN (via unphosphorylated C-terminus); this interaction diminishes the degradation rate of PTEN. Interacts (via guanylate kinase domain) with DLGAP1. Interacts (via the PDZ domains) with GRIN2A, GRID2 and NLGN1. Interacts with CTNND2, CTNNB1 and MAGUIN-1. Interacts with ACVR2A, SMAD2 and SMAD3. Part of a complex consisting of MAGI2/ARIP1, ACVR2A, ACVR1B and SMAD3. May interact with HTR2A. Interacts with RAPGEF2. Identified in a complex with ACTN4, CASK, IQGAP1, NPHS1, SPTAN1 and SPTBN1. Interacts with DDN. Found in a complex, at least composed of KIDINS220, MAGI2, NTRK1 and RAPGEF2; the complex is mainly formed at late endosomes in a NGF-dependent manner. Interacts with RAPGEF2; the interaction occurs before or after nerve growth factor (NGF) stimulation. Interacts (via PDZ domain) with KIDINS220 (via C-terminal domain). Interacts with IGSF9 and HTR4. Interacts with DLL1. Found in a complex with IGSF9B and NLGN2; the interaction with IGSF9B is mediated via the PDZ 5 and PDZ 6 domains, while the interaction with NLGN2 is mediated via the WW1, WW2 and PDZ2 domains. Interacts (via PDZ 6 domain) with USH1G (via SAM domain); the interaction is triggered by phosphorylation of USH1G by CK2 and negatively regulates MAGI2-mediated endocytosis. In terms of tissue distribution, expressed throughout the retina except in the nuclear layers and the photoreceptor outer segments (at protein level). Highest retinal expression is observed in the outer plexiform layer, the outer limiting membrane and the inner segment of photoreceptor cells (at protein level). Expressed in brain.

It localises to the cytoplasm. Its subcellular location is the late endosome. It is found in the synapse. The protein resides in the synaptosome. The protein localises to the cell membrane. It localises to the cytoskeleton. Its subcellular location is the microtubule organizing center. It is found in the centrosome. The protein resides in the cell projection. The protein localises to the cilium. It localises to the centriole. Its subcellular location is the photoreceptor inner segment. It is found in the photoreceptor outer segment. In terms of biological role, seems to act as a scaffold molecule at synaptic junctions by assembling neurotransmitter receptors and cell adhesion proteins. Plays a role in nerve growth factor (NGF)-induced recruitment of RAPGEF2 to late endosomes and neurite outgrowth. May play a role in regulating activin-mediated signaling in neuronal cells. Enhances the ability of PTEN to suppress AKT1 activation. Plays a role in receptor-mediated clathrin-dependent endocytosis which is required for ciliogenesis. In Mus musculus (Mouse), this protein is Membrane-associated guanylate kinase, WW and PDZ domain-containing protein 2 (Magi2).